The following is a 497-amino-acid chain: Delayed-rectifier potassium channel regulatory subunit KCNS1 (497 aa).

The Cytoplasmic portion of the chain corresponds to 1–186 (MVSEFPGPGS…LTMENPGYSL (186 aa)). The helical transmembrane segment at 187-208 (PSKLFSCVSIGVVLASIAAMCI) threads the bilayer. Residues 209 to 239 (HSLPEYQAREAAAAVAAVAAGRSAEEVRDDP) are Extracellular-facing. The helical transmembrane segment at 240–262 (VLRRLEYFCIAWFSFEVSSRLLL) threads the bilayer. The Cytoplasmic segment spans residues 263-273 (APSTRNFFCHP). A helical transmembrane segment spans residues 274 to 291 (LNLIDIVSVLPFYLTLLA). The Extracellular portion of the chain corresponds to 292–309 (GAALGDQRGASGEELGDL). The chain crosses the membrane as a helical; Voltage-sensor span at residues 310–330 (GKVVQVFRLMRIFRVLKLARH). At 331-345 (STGLRSLGATLKHSY) the chain is on the cytoplasmic side. The chain crosses the membrane as a helical span at residues 346–367 (REVGILLLYLAVGVSVFSGVAY). The Extracellular portion of the chain corresponds to 368-379 (TAEEENEGFHTI). Residues 380-391 (PACWWWGTVSMT) constitute an intramembrane region (helical). The Selectivity filter motif lies at 392 to 397 (TVGYGD). The stretch at 392-399 (TVGYGDVV) is an intramembrane region. Topologically, residues 400–406 (PETVGGK) are extracellular. The helical transmembrane segment at 407–435 (LAASGCILGGILVVALPITIIFNKFSHFY) threads the bilayer. Residues 436–497 (RRQKALEAAV…PREPAKSHSY (62 aa)) lie on the Cytoplasmic side of the membrane. The tract at residues 464 to 497 (SDVSLETSRDTSQEGRSTDLETQAPREPAKSHSY) is disordered. Residues 470–482 (TSRDTSQEGRSTD) are compositionally biased toward basic and acidic residues.

It belongs to the potassium channel family. S (TC 1.A.1.2) subfamily. Kv9.1/KCNS1 sub-subfamily. Heterotetramer with KCNB1 and KCNB2. Does not form homomultimers. As to expression, detected in brain, but not in the other tissues tested. The highest levels of expression are in olfactory bulb, cerebral cortex, hippocampus, habenula, basolateral amygdaloid nuclei and cerebellum.

It localises to the cell membrane. Its function is as follows. Potassium channel regulatory subunit that modulate the delayed rectifier voltage-gated potassium channel activity of KCNB1 and KCNB2 by altering their kinetics, expression levels, and shifting the half-inactivation potential to more polarized values. While it does not form functional channels on its own, it can form functional heterotetrameric channels with KCNB1 and KCNB2. Each regulatory subunit has unique regulatory properties that can lead to extensive inhibition, significant changes in kinetics, and/or substantial shifts in the voltage dependencies of the inactivation process. The polypeptide is Delayed-rectifier potassium channel regulatory subunit KCNS1 (Mus musculus (Mouse)).